Here is a 117-residue protein sequence, read N- to C-terminus: uncharacterized protein (117 aa).

This is an uncharacterized protein from Mus musculus (Mouse).